Here is a 458-residue protein sequence, read N- to C-terminus: Cysteine--tRNA ligase (458 aa).

C33 lines the Zn(2+) pocket. Residues 35–45 carry the 'HIGH' region motif; the sequence is PTVYDFAHIGN. C221, H246, and E250 together coordinate Zn(2+). Positions 279–283 match the 'KMSKS' region motif; it reads KMSKS. ATP is bound at residue K282.

Belongs to the class-I aminoacyl-tRNA synthetase family. In terms of assembly, monomer. Zn(2+) is required as a cofactor.

The protein resides in the cytoplasm. The enzyme catalyses tRNA(Cys) + L-cysteine + ATP = L-cysteinyl-tRNA(Cys) + AMP + diphosphate. The polypeptide is Cysteine--tRNA ligase (Rhizobium etli (strain ATCC 51251 / DSM 11541 / JCM 21823 / NBRC 15573 / CFN 42)).